A 269-amino-acid polypeptide reads, in one-letter code: Phosphate import ATP-binding protein PstB 2 (269 aa).

Residues leucine 22 to valine 264 form the ABC transporter domain. ATP is bound at residue glycine 55–serine 62.

Belongs to the ABC transporter superfamily. Phosphate importer (TC 3.A.1.7) family. The complex is composed of two ATP-binding proteins (PstB), two transmembrane proteins (PstC and PstA) and a solute-binding protein (PstS).

Its subcellular location is the cell membrane. It carries out the reaction phosphate(out) + ATP + H2O = ADP + 2 phosphate(in) + H(+). In terms of biological role, part of the ABC transporter complex PstSACB involved in phosphate import. Responsible for energy coupling to the transport system. The polypeptide is Phosphate import ATP-binding protein PstB 2 (Lactococcus lactis subsp. lactis (strain IL1403) (Streptococcus lactis)).